Consider the following 198-residue polypeptide: V-type ATP synthase subunit E (198 aa).

This sequence belongs to the V-ATPase E subunit family.

Its function is as follows. Produces ATP from ADP in the presence of a proton gradient across the membrane. The polypeptide is V-type ATP synthase subunit E (Clostridium novyi (strain NT)).